The chain runs to 641 residues: 1-phosphatidylinositol 4,5-bisphosphate phosphodiesterase zeta-1 (641 aa).

An EF-hand domain is found at 35–70 (CSYIHVKRIFKDNDRLKQGRITIEEFRAIYRILTHR). A PI-PLC X-box domain is found at 155 to 299 (QDMTHPLNDY…LKFKVLVKNK (145 aa)). Catalysis depends on residues histidine 170 and histidine 215. The 117-residue stretch at 382–498 (LSDLVIYTKA…GYILKPHFLR (117 aa)) folds into the PI-PLC Y-box domain. One can recognise a C2 domain in the interval 498–622 (RESESYFNPS…KGYRRVPLFS (125 aa)).

In terms of assembly, interacts via its C2 domain with PtdIns(3)P and, to a lesser extent, PtdIns(5)P in vitro. Ca(2+) serves as cofactor.

Its subcellular location is the nucleus. The protein resides in the cytoplasm. It is found in the perinuclear region. It catalyses the reaction a 1,2-diacyl-sn-glycero-3-phospho-(1D-myo-inositol-4,5-bisphosphate) + H2O = 1D-myo-inositol 1,4,5-trisphosphate + a 1,2-diacyl-sn-glycerol + H(+). Functionally, the production of the second messenger molecules diacylglycerol (DAG) and inositol 1,4,5-trisphosphate (IP3) is mediated by activated phosphatidylinositol-specific phospholipase C enzymes. In vitro, hydrolyzes PtdIns(4,5)P2 in a Ca(2+)-dependent manner. Triggers intracellular Ca(2+) oscillations in oocytes solely during M phase and is involved in inducing oocyte activation and initiating embryonic development up to the blastocyst stage. Is therefore a strong candidate for the egg-activating soluble sperm factor that is transferred from the sperm into the egg cytoplasm following gamete membrane fusion. May exert an inhibitory effect on phospholipase-C-coupled processes that depend on calcium ions and protein kinase C, including CFTR trafficking and function. The protein is 1-phosphatidylinositol 4,5-bisphosphate phosphodiesterase zeta-1 of Macaca fascicularis (Crab-eating macaque).